A 307-amino-acid chain; its full sequence is Transmembrane protein 200B (307 aa).

Residues 1–38 are disordered; sequence MTAGSPEECGEVRRSPEGRVSRLGRRLGRRRRPRSPPE. Basic and acidic residues predominate over residues 10–20; sequence GEVRRSPEGRV. Residues 22 to 34 show a composition bias toward basic residues; that stretch reads RLGRRLGRRRRPR. A helical membrane pass occupies residues 53–73; that stretch reads GAFAALGALVVLVGMGIAVAG. The segment at 81–111 is disordered; it reads APGSRAANASSPQMSELRREGRGGGRAHGPH. Asparagine 88 carries N-linked (GlcNAc...) asparagine glycosylation. A compositionally biased stretch (basic and acidic residues) spans 96 to 111; that stretch reads ELRREGRGGGRAHGPH. Residues 116 to 136 form a helical membrane-spanning segment; the sequence is LLGPVIMGVGLFVFICANTLL. The disordered stretch occupies residues 180–211; sequence AVGCAEPEIWDPSPRRGTSPVPSVRSLRSEPA.

This sequence belongs to the TMEM200 family.

Its subcellular location is the membrane. The protein is Transmembrane protein 200B (TMEM200B) of Homo sapiens (Human).